The chain runs to 314 residues: Transcription factor DICHOTOMA (314 aa).

The 59-residue stretch at 87–145 (KKDRHSKINRPQGPRDRRVRLSIGIARKFFDLQEMLGFDKPSKTLDWLLTKSKEAIKEL) folds into the TCP domain. A R domain is found at 201–218 (KESRAKARARARERTKEK).

Its subcellular location is the nucleus. Transcription regulator involved in the dorsovental asymmetry of flowers. Promotes dorsal identity. This Antirrhinum majus (Garden snapdragon) protein is Transcription factor DICHOTOMA (DICH).